A 263-amino-acid polypeptide reads, in one-letter code: Small ribosomal subunit protein eS4, Y isoform 2 (263 aa).

The 63-residue stretch at 42-104 (LPLIVFLRNR…TGEHFRLVYD (63 aa)) folds into the S4 RNA-binding domain.

The protein belongs to the eukaryotic ribosomal protein eS4 family.

The polypeptide is Small ribosomal subunit protein eS4, Y isoform 2 (RPS4Y2) (Pan troglodytes (Chimpanzee)).